The following is a 588-amino-acid chain: Histone-arginine methyltransferase CARM1 (588 aa).

The SAM-dependent MTase PRMT-type domain maps to 120–427; that stretch reads AVQYFQFYGY…KRQSYDISIV (308 aa). S-adenosyl-L-methionine-binding residues include glutamine 133, arginine 142, glycine 166, glutamate 188, glutamate 217, and serine 245. Residues 473–588 are transactivation domain; that stretch reads TGGTYSMSQG…IPSNTMHYGS (116 aa).

Belongs to the class I-like SAM-binding methyltransferase superfamily. Protein arginine N-methyltransferase family. Homodimer.

The protein localises to the nucleus. Its subcellular location is the cytoplasm. It is found in the chromosome. It carries out the reaction L-arginyl-[protein] + 2 S-adenosyl-L-methionine = N(omega),N(omega)-dimethyl-L-arginyl-[protein] + 2 S-adenosyl-L-homocysteine + 2 H(+). Its function is as follows. Methylates (mono- and asymmetric dimethylation) the guanidino nitrogens of arginyl residues in several proteins involved in DNA packaging, transcription regulation, pre-mRNA splicing, and mRNA stability. Recruited to promoters upon gene activation together with histone acetyltransferases from EP300/P300 and p160 families, methylates histone H3 at 'Arg-17' (H3R17me) and activates transcription via chromatin remodeling. In Danio rerio (Zebrafish), this protein is Histone-arginine methyltransferase CARM1 (carm1).